We begin with the raw amino-acid sequence, 156 residues long: UPF0251 protein Sfum_2819 (156 aa).

It belongs to the UPF0251 family.

The polypeptide is UPF0251 protein Sfum_2819 (Syntrophobacter fumaroxidans (strain DSM 10017 / MPOB)).